We begin with the raw amino-acid sequence, 395 residues long: Acetate kinase (395 aa).

Mg(2+) is bound at residue N8. K15 contributes to the ATP binding site. R89 serves as a coordination point for substrate. The active-site Proton donor/acceptor is the D146. ATP contacts are provided by residues 206–210 (HLGNG), 281–283 (DLR), and 329–333 (GIGEN). E382 serves as a coordination point for Mg(2+).

It belongs to the acetokinase family. Homodimer. The cofactor is Mg(2+). Mn(2+) is required as a cofactor.

It localises to the cytoplasm. The catalysed reaction is acetate + ATP = acetyl phosphate + ADP. The protein operates within metabolic intermediate biosynthesis; acetyl-CoA biosynthesis; acetyl-CoA from acetate: step 1/2. Functionally, catalyzes the formation of acetyl phosphate from acetate and ATP. Can also catalyze the reverse reaction. This is Acetate kinase from Shouchella clausii (strain KSM-K16) (Alkalihalobacillus clausii).